The primary structure comprises 313 residues: Acetaldehyde dehydrogenase 3 (313 aa).

11–14 (SGNI) lines the NAD(+) pocket. The Acyl-thioester intermediate role is filled by Cys129. NAD(+)-binding positions include 160 to 168 (SAGPGTRAN) and Asn288.

The protein belongs to the acetaldehyde dehydrogenase family.

It carries out the reaction acetaldehyde + NAD(+) + CoA = acetyl-CoA + NADH + H(+). In Rhizorhabdus wittichii (strain DSM 6014 / CCUG 31198 / JCM 15750 / NBRC 105917 / EY 4224 / RW1) (Sphingomonas wittichii), this protein is Acetaldehyde dehydrogenase 3.